Reading from the N-terminus, the 173-residue chain is Translation initiation factor IF-3 (173 aa).

It belongs to the IF-3 family. Monomer.

It localises to the cytoplasm. IF-3 binds to the 30S ribosomal subunit and shifts the equilibrium between 70S ribosomes and their 50S and 30S subunits in favor of the free subunits, thus enhancing the availability of 30S subunits on which protein synthesis initiation begins. This Campylobacter lari (strain RM2100 / D67 / ATCC BAA-1060) protein is Translation initiation factor IF-3.